The sequence spans 179 residues: MAEYGREPCPFRIVEDCGGAFAMGALGGGAFQAIKGFRNAPSGLGYRLSGGLAAVRARSGLVGGNFAVWGATFSAIDCSLVYFRKKEDPWNAIISGATTGGILAARTGLTSMLSSALVGGALLALIEGVGIVVSHYSADSYRQVSPVERQQRYKQELLRQQKGVSPLAATYGEIDSSAL.

A run of 3 helical transmembrane segments spans residues 17–37 (CGGAFAMGALGGGAFQAIKGF), 61–81 (LVGGNFAVWGATFSAIDCSLV), and 113–133 (LSSALVGGALLALIEGVGIVV).

It belongs to the Tim17/Tim22/Tim23 family. In terms of assembly, component of the TIM23 complex at least composed of Tim23, Tim17 (Tim17a1, Tim17a2 or Tim17b1) and a Tim50. The complex interacts with the Tim44 component of the PAM complex.

Its subcellular location is the mitochondrion inner membrane. Its function is as follows. Essential component of the TIM23 complex, a complex that mediates the translocation of transit peptide-containing proteins across the mitochondrial inner membrane. The sequence is that of Probable mitochondrial import inner membrane translocase subunit Tim17 1 (Tim17b1) from Drosophila melanogaster (Fruit fly).